Consider the following 253-residue polypeptide: Rab GTPase-activating protein 1-like, isoform 10 (253 aa).

Residues 8 to 222 adopt a coiled-coil conformation; that stretch reads SMTFEERENR…MNEIQAAKNS (215 aa). The interval 233-253 is disordered; sequence TATGTQPLQPAPVTQPPKEST.

The polypeptide is Rab GTPase-activating protein 1-like, isoform 10 (RABGAP1L) (Homo sapiens (Human)).